Here is a 303-residue protein sequence, read N- to C-terminus: Nucleotide-binding protein Acry_0446 (303 aa).

10–17 contacts ATP; it reads GLSGAGRN. 54 to 57 lines the GTP pocket; the sequence is DART.

The protein belongs to the RapZ-like family.

Its function is as follows. Displays ATPase and GTPase activities. The polypeptide is Nucleotide-binding protein Acry_0446 (Acidiphilium cryptum (strain JF-5)).